A 264-amino-acid chain; its full sequence is Small ribosomal subunit protein eS1 (264 aa).

Belongs to the eukaryotic ribosomal protein eS1 family. Component of the small ribosomal subunit. Mature ribosomes consist of a small (40S) and a large (60S) subunit. The 40S subunit contains about 33 different proteins and 1 molecule of RNA (18S). The 60S subunit contains about 49 different proteins and 3 molecules of RNA (25S, 5.8S and 5S).

The protein resides in the cytoplasm. The chain is Small ribosomal subunit protein eS1 from Babesia bovis.